We begin with the raw amino-acid sequence, 160 residues long: Phosphopantetheine adenylyltransferase (160 aa).

T10 contributes to the substrate binding site. ATP-binding positions include 10–11 (TF) and H18. 3 residues coordinate substrate: K42, L74, and R88. ATP contacts are provided by residues 89–91 (GLR), E99, and 124–130 (NSFISST).

Belongs to the bacterial CoaD family. Homohexamer. Mg(2+) serves as cofactor.

It localises to the cytoplasm. It carries out the reaction (R)-4'-phosphopantetheine + ATP + H(+) = 3'-dephospho-CoA + diphosphate. The protein operates within cofactor biosynthesis; coenzyme A biosynthesis; CoA from (R)-pantothenate: step 4/5. Functionally, reversibly transfers an adenylyl group from ATP to 4'-phosphopantetheine, yielding dephospho-CoA (dPCoA) and pyrophosphate. This Aeromonas salmonicida (strain A449) protein is Phosphopantetheine adenylyltransferase.